Here is a 475-residue protein sequence, read N- to C-terminus: ATP synthase subunit beta, chloroplastic (475 aa).

155–162 (GGAGVGKT) contributes to the ATP binding site.

This sequence belongs to the ATPase alpha/beta chains family. F-type ATPases have 2 components, CF(1) - the catalytic core - and CF(0) - the membrane proton channel. CF(1) has five subunits: alpha(3), beta(3), gamma(1), delta(1), epsilon(1). CF(0) has four main subunits: a(1), b(1), b'(1) and c(9-12).

Its subcellular location is the plastid. The protein resides in the chloroplast thylakoid membrane. The enzyme catalyses ATP + H2O + 4 H(+)(in) = ADP + phosphate + 5 H(+)(out). Produces ATP from ADP in the presence of a proton gradient across the membrane. The catalytic sites are hosted primarily by the beta subunits. In Ochrosphaera neapolitana, this protein is ATP synthase subunit beta, chloroplastic.